The following is a 48-amino-acid chain: uncharacterized protein (48 aa).

This is an uncharacterized protein from Haemophilus influenzae (strain ATCC 51907 / DSM 11121 / KW20 / Rd).